Consider the following 141-residue polypeptide: Large ribosomal subunit protein uL11 (141 aa).

Belongs to the universal ribosomal protein uL11 family. As to quaternary structure, part of the ribosomal stalk of the 50S ribosomal subunit. Interacts with L10 and the large rRNA to form the base of the stalk. L10 forms an elongated spine to which L12 dimers bind in a sequential fashion forming a multimeric L10(L12)X complex. In terms of processing, one or more lysine residues are methylated.

Forms part of the ribosomal stalk which helps the ribosome interact with GTP-bound translation factors. The chain is Large ribosomal subunit protein uL11 from Prochlorococcus marinus (strain SARG / CCMP1375 / SS120).